A 216-amino-acid polypeptide reads, in one-letter code: Pentapeptide repeat protein VPA0095 (216 aa).

It belongs to the pentapeptide repeat protein family.

In terms of biological role, has no effect when overexpressed in E.coli. When Cys-115 is mutated to Tyr and overexpressed it increases (fluoro)quinolone resistance in E.coli up to 16-fold for ciprofloxacin, levofloxacin and nalidixic acid. This chain is Pentapeptide repeat protein VPA0095, found in Vibrio parahaemolyticus serotype O3:K6 (strain RIMD 2210633).